Consider the following 380-residue polypeptide: uncharacterized protein (380 aa).

The region spanning 287–318 (LRPKIYQDKCKNCRECLVEKYCPTFAIKRENG) is the 4Fe-4S ferredoxin-type domain.

This is an uncharacterized protein from Methanocaldococcus jannaschii (strain ATCC 43067 / DSM 2661 / JAL-1 / JCM 10045 / NBRC 100440) (Methanococcus jannaschii).